Consider the following 230-residue polypeptide: Proteasome subunit beta 2 (230 aa).

The segment covering 1–10 has biased composition (basic and acidic residues); sequence MHDPENRLTD. The segment at 1–29 is disordered; sequence MHDPENRLTDAYEPEVGNLPNEDSGRDEE. The propeptide at 1–35 is removed in mature form; by autocatalysis; it reads MHDPENRLTDAYEPEVGNLPNEDSGRDEENVVKTG. T36 acts as the Nucleophile in catalysis.

It belongs to the peptidase T1B family. The 20S proteasome core is composed of 14 alpha and 14 beta subunits that assemble into four stacked heptameric rings, resulting in a barrel-shaped structure. The two inner rings, each composed of seven catalytic beta subunits, are sandwiched by two outer rings, each composed of seven alpha subunits. The catalytic chamber with the active sites is on the inside of the barrel. Has a gated structure, the ends of the cylinder being occluded by the N-termini of the alpha-subunits. Is capped at one or both ends by the proteasome regulatory ATPase, PAN.

It localises to the cytoplasm. It catalyses the reaction Cleavage of peptide bonds with very broad specificity.. The formation of the proteasomal ATPase PAN-20S proteasome complex, via the docking of the C-termini of PAN into the intersubunit pockets in the alpha-rings, triggers opening of the gate for substrate entry. Interconversion between the open-gate and close-gate conformations leads to a dynamic regulation of the 20S proteasome proteolysis activity. Component of the proteasome core, a large protease complex with broad specificity involved in protein degradation. The sequence is that of Proteasome subunit beta 2 from Haloarcula marismortui (strain ATCC 43049 / DSM 3752 / JCM 8966 / VKM B-1809) (Halobacterium marismortui).